A 182-amino-acid polypeptide reads, in one-letter code: Allergen Bla g 4 (182 aa).

The N-terminal stretch at 1–12 is a signal peptide; it reads AVLALCATDTLA. An N-linked (GlcNAc...) asparagine glycan is attached at N72.

Belongs to the calycin superfamily. Triabin family.

The protein localises to the secreted. Its function is as follows. Probable ligand-binding protein. This is Allergen Bla g 4 from Blattella germanica (German cockroach).